Reading from the N-terminus, the 192-residue chain is MAQLYFYYSAMNAGKSTSLLQSSYNYRERGMNTLVMTASIDDRYGKGKVASRIGIESDAQVFSSHDNLIEMITAAHQENHLSCVLVDECQFLSKEQVKQLTYIVDKIDIPVLCYGLRTDFQGELFSGSHYLLAWADKLVELKTICHCGRKANMVVRLDGEGKVMREGEQVAIGGNESYESVCRKHFREFIWD.

Residues 9–16 (SAMNAGKS) and 87–90 (DECQ) each bind ATP. Catalysis depends on Glu-88, which acts as the Proton acceptor. Residues Cys-145, Cys-147, Cys-182, and His-185 each coordinate Zn(2+).

This sequence belongs to the thymidine kinase family. Homotetramer.

The protein localises to the cytoplasm. It carries out the reaction thymidine + ATP = dTMP + ADP + H(+). This is Thymidine kinase from Shewanella oneidensis (strain ATCC 700550 / JCM 31522 / CIP 106686 / LMG 19005 / NCIMB 14063 / MR-1).